The following is a 344-amino-acid chain: HTH-type transcriptional repressor MelR (344 aa).

The HTH lacI-type domain maps to 2–58 (VRIKDIALKAKVSSATVSRILNEDESLSVAGETRQRVINIAEELGYQTVAKRRKSRG). The H-T-H motif DNA-binding region spans 4–23 (IKDIALKAKVSSATVSRILN).

Its subcellular location is the cytoplasm. In terms of biological role, represses the melibiose operon melREDCA in the absence of melibiose or raffinose. Binds to two binding sites at the promoter region of the operon. The chain is HTH-type transcriptional repressor MelR from Bacillus subtilis (strain 168).